The chain runs to 238 residues: N-terminal acetyltransferase A complex catalytic subunit ARD1 (238 aa).

Residues 35 to 195 (YHILSWPEAS…DAYAMKKVLK (161 aa)) form the N-acetyltransferase domain.

Belongs to the acetyltransferase family. ARD1 subfamily. Component of the N-terminal acetyltransferase A (NatA) complex, which is composed of ARD1, NAT1 and NAT5. Can self-associate.

It is found in the cytoplasm. It catalyses the reaction N-terminal glycyl-[protein] + acetyl-CoA = N-terminal N(alpha)-acetylglycyl-[protein] + CoA + H(+). The catalysed reaction is N-terminal L-alanyl-[protein] + acetyl-CoA = N-terminal N(alpha)-acetyl-L-alanyl-[protein] + CoA + H(+). The enzyme catalyses N-terminal L-seryl-[protein] + acetyl-CoA = N-terminal N(alpha)-acetyl-L-seryl-[protein] + CoA + H(+). It carries out the reaction N-terminal L-valyl-[protein] + acetyl-CoA = N-terminal N(alpha)-acetyl-L-valyl-[protein] + CoA + H(+). It catalyses the reaction N-terminal L-cysteinyl-[protein] + acetyl-CoA = N-terminal N(alpha)-acetyl-L-cysteinyl-[protein] + CoA + H(+). The catalysed reaction is N-terminal L-threonyl-[protein] + acetyl-CoA = N-terminal N(alpha)-acetyl-L-threonyl-[protein] + CoA + H(+). Catalytic component of the NatA N-terminal acetyltransferase, which catalyzes acetylation of proteins beginning with Met-Ser, Met-Gly and Met-Ala. N-acetylation plays a role in normal eukaryotic translation and processing, protect against proteolytic degradation and protein turnover. The polypeptide is N-terminal acetyltransferase A complex catalytic subunit ARD1 (ARD1) (Saccharomyces cerevisiae (strain ATCC 204508 / S288c) (Baker's yeast)).